A 467-amino-acid polypeptide reads, in one-letter code: Probable Xaa-Pro aminopeptidase SMAC_04549 (467 aa).

Residues aspartate 263, aspartate 274, glutamate 397, and glutamate 437 each contribute to the Mn(2+) site.

This sequence belongs to the peptidase M24B family. Requires Mn(2+) as cofactor.

It catalyses the reaction Release of any N-terminal amino acid, including proline, that is linked to proline, even from a dipeptide or tripeptide.. Functionally, catalyzes the removal of a penultimate prolyl residue from the N-termini of peptides. In Sordaria macrospora (strain ATCC MYA-333 / DSM 997 / K(L3346) / K-hell), this protein is Probable Xaa-Pro aminopeptidase SMAC_04549.